A 173-amino-acid chain; its full sequence is Small ribosomal subunit protein uS7 (173 aa).

The protein belongs to the universal ribosomal protein uS7 family. In terms of assembly, part of the 30S ribosomal subunit. Contacts proteins S9 and S11.

Functionally, one of the primary rRNA binding proteins, it binds directly to 16S rRNA where it nucleates assembly of the head domain of the 30S subunit. Is located at the subunit interface close to the decoding center, probably blocks exit of the E-site tRNA. The chain is Small ribosomal subunit protein uS7 from Orientia tsutsugamushi (strain Ikeda) (Rickettsia tsutsugamushi).